Reading from the N-terminus, the 256-residue chain is Lysine-rich coiled-coil protein 1 (256 aa).

Disordered regions lie at residues 62–84 and 144–256; these read RLPS…EDRV and TIDP…ILGF. A compositionally biased stretch (polar residues) spans 64–79; that stretch reads PSGTNHSYPRSCSSSQ. Basic and acidic residues-rich tracts occupy residues 161–188 and 218–227; these read HVEE…DLNK and KTRDVSSKKE. Residues 209–247 adopt a coiled-coil conformation; sequence EKLKNRKEKKTRDVSSKKEDRKRRKEKKEQGEERTEEEM.

The chain is Lysine-rich coiled-coil protein 1 (Krcc1) from Mus musculus (Mouse).